The primary structure comprises 102 residues: UPF0213 protein XCC3072 (102 aa).

The GIY-YIG domain occupies 5 to 80 (KPWHLYLLLC…KQQPRARKLA (76 aa)).

It belongs to the UPF0213 family.

This chain is UPF0213 protein XCC3072, found in Xanthomonas campestris pv. campestris (strain ATCC 33913 / DSM 3586 / NCPPB 528 / LMG 568 / P 25).